The chain runs to 393 residues: Methylthioribose kinase (393 aa).

ATP is bound by residues N38, K53, and 107–109 (EDL). Substrate is bound at residue D225. 242 to 244 (DPE) provides a ligand contact to ATP. R332 is a substrate binding site.

This sequence belongs to the methylthioribose kinase family. As to quaternary structure, homodimer.

It catalyses the reaction 5-(methylsulfanyl)-D-ribose + ATP = 5-(methylsulfanyl)-alpha-D-ribose 1-phosphate + ADP + H(+). Its pathway is amino-acid biosynthesis; L-methionine biosynthesis via salvage pathway; S-methyl-5-thio-alpha-D-ribose 1-phosphate from S-methyl-5'-thioadenosine (hydrolase route): step 2/2. Its function is as follows. Catalyzes the phosphorylation of methylthioribose into methylthioribose-1-phosphate. In Bacillus cereus (strain ATCC 10987 / NRS 248), this protein is Methylthioribose kinase.